Reading from the N-terminus, the 335-residue chain is Phenylalanine--tRNA ligase alpha subunit (335 aa).

Residue glutamate 262 participates in Mg(2+) binding.

Belongs to the class-II aminoacyl-tRNA synthetase family. Phe-tRNA synthetase alpha subunit type 1 subfamily. As to quaternary structure, tetramer of two alpha and two beta subunits. Mg(2+) serves as cofactor.

It is found in the cytoplasm. The enzyme catalyses tRNA(Phe) + L-phenylalanine + ATP = L-phenylalanyl-tRNA(Phe) + AMP + diphosphate + H(+). The polypeptide is Phenylalanine--tRNA ligase alpha subunit (Prochlorococcus marinus (strain MIT 9313)).